Here is a 194-residue protein sequence, read N- to C-terminus: Acireductone dioxygenase 1 (194 aa).

Positions 1 to 21 (MEAWYMDDSADDQRKPHHRSP) are disordered. 4 residues coordinate Fe(2+): His87, His89, Glu93, and His132. Positions 87, 89, 93, and 132 each coordinate Ni(2+).

This sequence belongs to the acireductone dioxygenase (ARD) family. Fe(2+) is required as a cofactor. It depends on Ni(2+) as a cofactor.

Its subcellular location is the cytoplasm. The protein localises to the nucleus. The enzyme catalyses 1,2-dihydroxy-5-(methylsulfanyl)pent-1-en-3-one + O2 = 4-methylsulfanyl-2-oxobutanoate + formate + 2 H(+). It carries out the reaction 1,2-dihydroxy-5-(methylsulfanyl)pent-1-en-3-one + O2 = 3-(methylsulfanyl)propanoate + CO + formate + 2 H(+). The protein operates within amino-acid biosynthesis; L-methionine biosynthesis via salvage pathway; L-methionine from S-methyl-5-thio-alpha-D-ribose 1-phosphate: step 5/6. In terms of biological role, catalyzes 2 different reactions between oxygen and the acireductone 1,2-dihydroxy-3-keto-5-methylthiopentene (DHK-MTPene) depending upon the metal bound in the active site. Fe-containing acireductone dioxygenase (Fe-ARD) produces formate and 2-keto-4-methylthiobutyrate (KMTB), the alpha-ketoacid precursor of methionine in the methionine recycle pathway. Ni-containing acireductone dioxygenase (Ni-ARD) produces methylthiopropionate, carbon monoxide and formate, and does not lie on the methionine recycle pathway. This Physcomitrium patens (Spreading-leaved earth moss) protein is Acireductone dioxygenase 1.